Consider the following 447-residue polypeptide: Phosphoglucosamine mutase (447 aa).

Serine 107 (phosphoserine intermediate) is an active-site residue. Positions 107, 246, 248, and 250 each coordinate Mg(2+). Position 107 is a phosphoserine (serine 107).

Belongs to the phosphohexose mutase family. Mg(2+) serves as cofactor. Post-translationally, activated by phosphorylation.

The catalysed reaction is alpha-D-glucosamine 1-phosphate = D-glucosamine 6-phosphate. Functionally, catalyzes the conversion of glucosamine-6-phosphate to glucosamine-1-phosphate. In Ralstonia pickettii (strain 12J), this protein is Phosphoglucosamine mutase.